The following is a 440-amino-acid chain: MSEFSQTVPELVAWARKNDFSISLPVDRLSFLLAVATLNGERLEGEMSEGELVDAFRHVSDAFEQTSETISQRANNAINDLVRQRLLNRFTSEITEGNAIYRLTPLGIGITDYYIRQREFSTLRLSMQLSIVASELKRAADAAEEGGDEFHWHRNVFAPLKYSVAEIFDSIDLTQRIMDEQQQLVKDDIAQLLNKDWRAAISSCELLLSETSGTLRELQDTLDAAGDKLQANLLRIQDSTMARDDLHFVDRLVFDLQSKLDRIVSWGQQAIDLWIGYDRHVHKFIRTAIDMDKNRVFAQRLRQSVQTYFDEPWALTYANADRLLDMRDEEMALRDEEVTGELPADLEFEEFNEIREQLAALIEAQLAVYKEKGIPLDLGLVAREFLAQYPRGRHFDVARIVVDQAVQLGVAQADFTGLPAKWQPINDYGAKVQAHVIDKY.

A leucine-zipper region spans residues 208-236 (LSETSGTLRELQDTLDAAGDKLQANLLRI).

This sequence belongs to the MukF family. In terms of assembly, interacts, and probably forms a ternary complex, with MukE and MukB via its C-terminal region. The complex formation is stimulated by calcium or magnesium. It is required for an interaction between MukE and MukB.

The protein resides in the cytoplasm. It localises to the nucleoid. In terms of biological role, involved in chromosome condensation, segregation and cell cycle progression. May participate in facilitating chromosome segregation by condensation DNA from both sides of a centrally located replisome during cell division. Not required for mini-F plasmid partitioning. Probably acts via its interaction with MukB and MukE. Overexpression results in anucleate cells. It has a calcium binding activity. This is Chromosome partition protein MukF from Klebsiella pneumoniae (strain 342).